The sequence spans 209 residues: Protein TIFY 11c (209 aa).

The 36-residue stretch at 93 to 128 (EITEKAQLTIFYGGSVVVFDDFPAEKAGELMKLAGS) folds into the Tify domain. The Jas signature appears at 153–177 (PIARKVSLQRFLEKRKNRIVVAEPL). A Nuclear localization signal motif is present at residues 155–162 (ARKVSLQR). The tract at residues 175–209 (EPLPESEKKEAESSKRAKKDDGGASWLQVNPTLSL) is disordered. Positions 179 to 196 (ESEKKEAESSKRAKKDDG) are enriched in basic and acidic residues.

The protein belongs to the TIFY/JAZ family. In terms of processing, ubiquitinated. Targeted for degradation by the SCF(COI1) E3 ubiquitin ligase-proteasome pathway during jasmonate signaling.

It localises to the nucleus. In terms of biological role, repressor of jasmonate responses. The polypeptide is Protein TIFY 11c (Oryza sativa subsp. indica (Rice)).